The primary structure comprises 903 residues: Probable dipeptidyl-aminopeptidase B (903 aa).

The disordered stretch occupies residues 1-83; the sequence is MGKFEDDGNS…PLISSGTKTG (83 aa). Topologically, residues 1–90 are cytoplasmic; the sequence is MGKFEDDGNS…KTGSSSRLRK (90 aa). Residues 10–37 are compositionally biased toward polar residues; the sequence is SESVPLTRQRSESLASQTSTDSGLSIAS. Residues 91 to 111 form a helical; Signal-anchor for type II membrane protein membrane-spanning segment; that stretch reads IVWLLVLLCVGGWVLSFVLFL. Residues 112-903 lie on the Vacuolar side of the membrane; it reads TQKRPDTAAL…TANPKPQEST (792 aa). The disordered stretch occupies residues 121–143; that stretch reads LSSASTVEIHEPGPATGGTSHGK. N-linked (GlcNAc...) asparagine glycosylation is found at Asn268, Asn349, and Asn640. Ser754 functions as the Charge relay system in the catalytic mechanism. Asn808 carries N-linked (GlcNAc...) asparagine glycosylation. Catalysis depends on charge relay system residues Asp831 and His864.

Belongs to the peptidase S9B family.

Its subcellular location is the vacuole membrane. The enzyme catalyses Release of an N-terminal dipeptide, Xaa-Yaa-|-Zaa-, from a polypeptide, preferentially when Yaa is Pro, provided Zaa is neither Pro nor hydroxyproline.. Its function is as follows. Type IV dipeptidyl-peptidase which removes N-terminal dipeptides sequentially from polypeptides having unsubstituted N-termini provided that the penultimate residue is proline. The protein is Probable dipeptidyl-aminopeptidase B (dapB) of Penicillium rubens (strain ATCC 28089 / DSM 1075 / NRRL 1951 / Wisconsin 54-1255) (Penicillium chrysogenum).